The sequence spans 137 residues: Type 3 secretion system pilotin (137 aa).

A signal peptide spans 1–14 (MLLPLALLLGGCVS).

Belongs to the ExsB/YscW family.

Its subcellular location is the cell outer membrane. Involved in the synthesis of the type III secretion system (T3SS), also called injectisome, which is used to inject bacterial effector proteins into eukaryotic host cells. Pilot protein that is required for the proper localization of the secretin PscC in the outer membrane. Necessary for full in vivo virulence. The chain is Type 3 secretion system pilotin from Pseudomonas aeruginosa (strain ATCC 15692 / DSM 22644 / CIP 104116 / JCM 14847 / LMG 12228 / 1C / PRS 101 / PAO1).